A 260-amino-acid chain; its full sequence is UPF0246 protein Bcep1808_2308 (260 aa).

This sequence belongs to the UPF0246 family.

The chain is UPF0246 protein Bcep1808_2308 from Burkholderia vietnamiensis (strain G4 / LMG 22486) (Burkholderia cepacia (strain R1808)).